The primary structure comprises 383 residues: G-protein coupled receptor E1 (383 aa).

The next 9 helical transmembrane spans lie at 13-35 (SSLA…TTIA), 78-98 (LYLL…IIVI), 109-129 (MLLL…PFWM), 160-180 (VFCI…AVTA), 190-210 (IVTC…EFFF), 242-262 (VIML…YVII), 279-299 (LIFV…IVLL), 323-343 (LITK…YAFV), and 351-371 (LYHF…PFLS). Cysteine 145 and cysteine 222 are oxidised to a cystine.

Belongs to the G-protein coupled receptor 1 family.

The protein localises to the host membrane. This Equine herpesvirus 2 (strain 86/87) (EHV-2) protein is G-protein coupled receptor E1 (E1).